The primary structure comprises 245 residues: Polynucleotide 3'-phosphatase (245 aa).

The protein belongs to the DNA 3' phosphatase family.

It is found in the nucleus. It catalyses the reaction a 3'end (2'-deoxyribonucleotide 3'-phosphate)-DNA + H2O = a 3'-end 2'-deoxyribonucleotide-DNA + phosphate. In terms of biological role, dephosphorylate DNA's 3'-phosphate termini. Has a role in the repair of breaks in single-stranded DNA. This is Polynucleotide 3'-phosphatase (TPP1) from Saccharomyces mikatae (Yeast).